A 480-amino-acid polypeptide reads, in one-letter code: Aspartyl/glutamyl-tRNA(Asn/Gln) amidotransferase subunit B (480 aa).

This sequence belongs to the GatB/GatE family. GatB subfamily. As to quaternary structure, heterotrimer of A, B and C subunits.

It carries out the reaction L-glutamyl-tRNA(Gln) + L-glutamine + ATP + H2O = L-glutaminyl-tRNA(Gln) + L-glutamate + ADP + phosphate + H(+). The enzyme catalyses L-aspartyl-tRNA(Asn) + L-glutamine + ATP + H2O = L-asparaginyl-tRNA(Asn) + L-glutamate + ADP + phosphate + 2 H(+). Allows the formation of correctly charged Asn-tRNA(Asn) or Gln-tRNA(Gln) through the transamidation of misacylated Asp-tRNA(Asn) or Glu-tRNA(Gln) in organisms which lack either or both of asparaginyl-tRNA or glutaminyl-tRNA synthetases. The reaction takes place in the presence of glutamine and ATP through an activated phospho-Asp-tRNA(Asn) or phospho-Glu-tRNA(Gln). The sequence is that of Aspartyl/glutamyl-tRNA(Asn/Gln) amidotransferase subunit B from Streptococcus pneumoniae (strain P1031).